Consider the following 484-residue polypeptide: uncharacterized protein (484 aa).

The helical transmembrane segment at 25-45 threads the bilayer; it reads PLSLFVVLAAVPLPIYFSGLL. In terms of domain architecture, EF-hand spans 384-419; the sequence is LSFEETKELWVRADLDGNGVFDYEELKKIWNMTMVN. Ca(2+) is bound by residues D397, D399, N401, and E408.

It is found in the membrane. This is an uncharacterized protein from Arabidopsis thaliana (Mouse-ear cress).